Reading from the N-terminus, the 117-residue chain is Non-specific lipid-transfer protein 1 (117 aa).

The signal sequence occupies residues 1-26 (MARAQVLLMAAALVLMLTAAPRAAVA). Disulfide bonds link C29-C76, C39-C53, C54-C99, and C74-C113. D33 carries the Cis-14-hydroxy-10,13-dioxo-7-heptadecenoic acid aspartate ester lipid modification.

It belongs to the plant LTP family. Aleurone layer of developing and germinating seeds.

Its function is as follows. Plant non-specific lipid-transfer proteins transfer phospholipids as well as galactolipids across membranes. May play a role in wax or cutin deposition in the cell walls of expanding epidermal cells and certain secretory tissues. The chain is Non-specific lipid-transfer protein 1 (LTP1) from Hordeum vulgare (Barley).